Consider the following 358-residue polypeptide: Acetylxylan esterase / glucomannan deacetylase (358 aa).

The signal sequence occupies residues 1 to 18; that stretch reads MKLLFPILLLTGSYFLSA. Cys19 is lipidated: N-palmitoyl cysteine. A lipid anchor (S-diacylglycerol cysteine) is attached at Cys19. Ser160 (nucleophile) is an active-site residue. Residues Asp333 and His335 each act as charge relay system in the active site.

Belongs to the carbohydrate esterase 2 (CE2) family.

It localises to the cell membrane. The enzyme catalyses Deacetylation of xylans and xylo-oligosaccharides.. The protein operates within glycan degradation; xylan degradation. Its function is as follows. Involved in the degradation of plant cell wall polysaccharides. Catalyzes the deacetylation of acetylated birchwood xylan and glucomannan, with equal efficiency, and of the synthetic substrate 4-nitrophenyl acetate (4-NPAc). Does not bind cellulose, cellohexaose and beta-glucan. The polypeptide is Acetylxylan esterase / glucomannan deacetylase (Cellvibrio japonicus (strain Ueda107) (Pseudomonas fluorescens subsp. cellulosa)).